Reading from the N-terminus, the 416-residue chain is Adenylosuccinate synthetase (416 aa).

Residues 13–19 (GDEGKGK) and 41–43 (GHT) each bind GTP. The active-site Proton acceptor is the Asp14. Positions 14 and 41 each coordinate Mg(2+). IMP-binding positions include 14 to 17 (DEGK), 39 to 42 (NAGH), Thr126, Arg140, Gln220, Thr235, and Arg299. The Proton donor role is filled by His42. Residue 295-301 (TTTGRKR) participates in substrate binding. GTP is bound by residues Arg301, 327–329 (KLD), and 405–407 (STS).

It belongs to the adenylosuccinate synthetase family. Homodimer. Mg(2+) is required as a cofactor.

Its subcellular location is the cytoplasm. The enzyme catalyses IMP + L-aspartate + GTP = N(6)-(1,2-dicarboxyethyl)-AMP + GDP + phosphate + 2 H(+). Its pathway is purine metabolism; AMP biosynthesis via de novo pathway; AMP from IMP: step 1/2. Its function is as follows. Plays an important role in the de novo pathway of purine nucleotide biosynthesis. Catalyzes the first committed step in the biosynthesis of AMP from IMP. The sequence is that of Adenylosuccinate synthetase from Campylobacter hominis (strain ATCC BAA-381 / DSM 21671 / CCUG 45161 / LMG 19568 / NCTC 13146 / CH001A).